The chain runs to 1670 residues: MKALILLLLGACQALQPGLEYQYRYSARVASGIPSINRQFAAAGIQADVTVQMAADYSVVVQFSNIEVGDLNKVLDCDLRAPLPIEYHPLEDYVDLLEKPFRVIMNESHVPSYMEGPEEPIWISNVRKGFVNIFRVPLFWSTELHSTKLNYGAVEETLVGRCQNWYTSMKLPVNLAEEVNVQREHFMEEDIQRDAYSSSYTTKTKSKTSSKTSSKTSSKTSSKTSKTGKTSPGQLANVPHIEDTLWSVRRTTDFDMCENLVSLQIHSSKYTEDIIQRSSVASYLIRGDTHRRIEQVVVEGTITVLTNKEQHEHVDTFTNQTLELKAVREVGEPITVTYDVHPHYDWQYDIERPQGDQFIPLEQVLTGRPVTDQIVNSIMEYIKKTVDDLSHRMEHYPAKPENLAYIIGRLVEAVANLDYPYIQTLYTHFDGKGTMQKYIFVQLVIHAGTEPAVNFAVDNLSDILFYVTFYESIGVSLRTPAPIPKIMHSLINGEEGLHHSLGLMNFATLAHDACLSEDRKHFYFDYSCGPKTTCDPELIITNFIPYLVRELGNQGKDVWQRLIYLQALSNLGTPQTINVLKPIILGVTETNIFMRTNAIWSLSAYNMHKTALSQIYEILMPIIENKGEQFEIRNIAFLTLATWGPGHAWWQQLAVSTWHDPSPQFANFVTTTIYSISDSHTKLAETVSRIKHLCKPAAPASILHSTNFFLHEYLFSEEHGSRVNFAWFASVHGAIPEEVFLRIQREFFYGYTKVLKIDGQQRGLYNLMQLMKQKMTKPQKRPQSSAQEIVSGMWEELKEKIGFTSPESASDATLWLKLDRLIYVALQYHFMEGAPIPYGMYSGKPFYDKDLNTLIAFPTEIGIPFSVLYVAEDATWLNINGNPETSMTSGKMKVNVDFIFETSQVQFVDARAHVPWSKRPAVASGVYADTQLVLPLNVHASFDMYSQEIQLSIEPTNTQKIDVIKFEFIPYTVLENNYPGDVLVIENEYKPILHGEVPLFNDKHQAFPSDVGLWIQVATEGDIHHTPSIYEIITQLFSAHTSTHIWEQSIVFDPTLSTTKTVSFTFNYVSTGGSGSLVDRGDYDDGQISQGSFDEDFGQFSQVAGGSDQDIMEVDSFGTQSQTIERIMRLQQALISSGGHVRTISVEVELQGTPTRNYEASLTWAISSSASTRSSKVQVTLIKHPAVGVLEDPYTICLNAQIVKPHFNPFFTTEDVLTANYHSTVKAELFEGETCEEAPVLLLEASFDVSSNVKERVKEAIEKGCDYSTYAPGIDIITSPLYDHSHITATWTPDFPDNLKNITYYVDDIIKASLSKKIEFDHTSAHHASRVEIDATKCIETGLWTVRTEKPYAVSIINELELPAWANPIFTPAPLATTLLYGLTVGRTPVSCTIDETKVRTADGKVFAYEPSECWNAMTLDTTFDQRGAMLVRNTGQWEVRIIWQKEGLVIDMSPTNFLVNGEPAKGTDNRYTVLHHDDSHTIVFESGTSVKVSDKVEVLLGLDHRGHTTGICGNFDGEPSNDMVGPKGCYYTDGPLFALSWASPGEGCASFMYKNLKRDVVWYQENCPHFTYEPTGVTHADALYDCTEWVYHQRTEGQYHCKALSPMPVCRPECVASHPITTSVEYECRFSGHQQQAQQQQQQQVQGTQWEECFPHFYTLTYPSSCIPQ.

Residues 1–14 (MKALILLLLGACQA) form the signal peptide. Residues 15-674 (LQPGLEYQYR…FANFVTTTIY (660 aa)) form a vittelogenin region. The 750-residue stretch at 15–764 (LQPGLEYQYR…LKIDGQQRGL (750 aa)) folds into the Vitellogenin domain. A glycan (N-linked (GlcNAc...) asparagine) is linked at Asn106. Over residues 198 to 231 (SSYTTKTKSKTSSKTSSKTSSKTSSKTSKTGKTS) the composition is skewed to low complexity. The interval 198–236 (SSYTTKTKSKTSSKTSSKTSSKTSSKTSKTGKTSPGQLA) is disordered. Asn319, Asn459, and Asn1301 each carry an N-linked (GlcNAc...) asparagine glycan. One can recognise a VWFD domain in the interval 1390-1550 (VSCTIDETKV…SWASPGEGCA (161 aa)). Disulfide bonds link Cys1392–Cys1513 and Cys1414–Cys1549.

Homodimer; disulfide-linked. Also exists as oligomers. Post-translationally, glycosylated. Contains mannose and N-acetylglucosamine. In terms of processing, substrate of transglutaminase. Widely expressed with highest levels in gill and heart. Not expressed in hemocytes.

It localises to the secreted. Its function is as follows. Forms stable clots in the presence of calcium. In Penaeus monodon (Giant tiger prawn), this protein is Hemolymph clottable protein.